A 291-amino-acid polypeptide reads, in one-letter code: Gamma-sarcoglycan (291 aa).

The Cytoplasmic segment spans residues 1 to 37 (MVREQYTTVTEGTHIERPENQHIYKIGIYGWRKRCLY). The helical; Signal-anchor for type II membrane protein transmembrane segment at 38-58 (LFVLLLLAILVVNLALTIWIL) threads the bilayer. Over 59 to 291 (KVMWFSPIGM…TCEEHSHVCL (233 aa)) the chain is Extracellular. A glycan (N-linked (GlcNAc...) asparagine) is linked at Asn110. 2 disulfide bridges follow: Cys265-Cys290 and Cys267-Cys283.

The protein belongs to the sarcoglycan beta/delta/gamma/zeta family. Interacts with the syntrophin SNTA1 and FLNC. Cross-link to form 2 major subcomplexes: one consisting of SGCB, SGCD and SGCG and the other consisting of SGCB and SGCD. The association between SGCB and SGCG is particularly strong while SGCA is loosely associated with the other sarcoglycans. Most strongly expressed in skeletal and heart muscle. Also detected in proliferating myoblasts.

It is found in the cell membrane. Its subcellular location is the sarcolemma. It localises to the cytoplasm. The protein resides in the cytoskeleton. Component of the sarcoglycan complex, a subcomplex of the dystrophin-glycoprotein complex which forms a link between the F-actin cytoskeleton and the extracellular matrix. In Mus musculus (Mouse), this protein is Gamma-sarcoglycan (Sgcg).